The primary structure comprises 1556 residues: Bromodomain adjacent to zinc finger domain protein 1A (1556 aa).

A required for interaction with the CHRAC1-POLE3 heterodimer. Required for interaction with the CHRAC1-POLE3 heterodimer region spans residues 1-128 (MPLLHRKPFV…EETVEVIRNN (128 aa)). The tract at residues 1–133 (MPLLHRKPFV…VIRNNGARLQ (133 aa)) is required for interaction with NCOR1. Residues 22–128 (EEVFYCKVTN…EETVEVIRNN (107 aa)) enclose the WAC domain. Ser-270 carries the post-translational modification Phosphoserine. A coiled-coil region spans residues 306–397 (KERDKLLKQE…YVEYLKQWSK (92 aa)). The DDT domain occupies 422–487 (PEIFGDALMV…LTAIFQAIAE (66 aa)). Residues 634 to 709 (IEDYVDILRQ…DISIGEEERE (76 aa)) are a coiled coil. Residues 662–695 (EAAARIRKRKEEKLKEQEQKMKEKQEKLKEDEQR) are compositionally biased toward basic and acidic residues. Disordered regions lie at residues 662-754 (EAAA…NGFK), 841-877 (PSSF…GPRD), and 941-966 (FHFS…AYDP). The interval 667 to 933 (IRKRKEEKLK…QEKSRICAQL (267 aa)) is required for interaction with SMARCA5 and formation of the CHRAC ISWI chromatin remodeling complex. Ser-702 bears the Phosphoserine mark. Residues 703 to 713 (IGEEEREDFDT) show a composition bias toward acidic residues. Residues 715–726 (IESKDTEQKELD) are compositionally biased toward basic and acidic residues. The span at 727-736 (QDMVTEDEDD) shows a compositional bias: acidic residues. Thr-731 carries the phosphothreonine modification. 2 stretches are compositionally biased toward polar residues: residues 842 to 872 (SSFQ…SNID) and 951 to 965 (SKPT…NAYD). Lys-952 participates in a covalent cross-link: Glycyl lysine isopeptide (Lys-Gly) (interchain with G-Cter in SUMO2). Residues Ser-960 and Ser-961 each carry the phosphoserine modification. The PHD-type zinc-finger motif lies at 1148 to 1198 (NARCKICRKKGDAENMVLCDGCDRGHHTYCVRPKLKTVPEGDWFCPECRPK). 2 disordered regions span residues 1202–1376 (RRLS…NFPN) and 1399–1431 (LQES…RQGG). Residues 1213–1258 (ESDEDVEDSMGGEDDEVDGDEEEGQSEEEEYEVEQDEDDSQEEEEV) show a composition bias toward acidic residues. Basic residues predominate over residues 1262-1276 (KRGRPQVRLPVKTRG). The span at 1277–1312 (KLSSSFSSRGQQQEPGRYPSRSQQSTPKTTVSSKTG) shows a compositional bias: polar residues. Phosphoserine occurs at positions 1281, 1320, 1339, 1353, 1363, 1371, 1402, 1413, and 1417. A compositionally biased stretch (polar residues) spans 1363–1374 (SANNTPENSPNF). Positions 1430-1533 (GGVHELSAFE…AFFHIQAQKL (104 aa)) constitute a Bromo domain. Position 1547 is a phosphothreonine (Thr-1547).

This sequence belongs to the WAL family. Component of the ACF-1 ISWI chromatin remodeling complex at least composed of SMARCA1 and BAZ1A, which regulates the spacing of histone octamers on the DNA template to facilitate access to DNA. Within the ACF-1 ISWI chromatin remodeling complex interacts with SMARCA1; the interaction is direct. Component of the ACF-5 ISWI chromatin remodeling complex (also called the ACF complex) at least composed of BAZ1A and SMARCA5/SNF2H, which regulates the spacing of histone octamers on the DNA template to facilitate access to DNA. Within the ACF-5 ISWI chromatin remodeling complex interacts with SMARCA5/SNF2H; the interaction is direct. Component of the CHRAC ISWI chromatin remodeling complex at least composed of SMARCA5/SNF2H, BAZ1A/ACF1, CHRAC1 and POLE3; the complex preferentially binds DNA through the CHRAC1-POLE3 heterodimer and possesses ATP-dependent nucleosome-remodeling activity. Within the complex interacts (via N-terminus) with POLE3-CHRAC1 heterodimer; the interaction is direct and is required for the complex to preferentially bind to DNA. Within the complex interacts with SMARCA5/SNF2H; the interaction is direct and promotes the interaction with the POLE3-CHRAC1 heterodimer. Interacts with NCOR1 (via its RD1 domain); the interaction corepresses a number of NCOR1-regulated genes. Highly expressed in testis and at low or undetectable levels in other tissues analyzed.

The protein localises to the nucleus. Its function is as follows. Regulatory subunit of the ATP-dependent ACF-1 and ACF-5 ISWI chromatin remodeling complexes, which form ordered nucleosome arrays on chromatin and slide edge- and center-positioned histone octamers away from their original location on the DNA template to facilitate access to DNA during DNA-templated processes such as DNA replication, transcription, and repair. Both complexes regulate the spacing of nucleosomes along the chromatin and have the ability to slide mononucleosomes to the center of a DNA template in an ATP-dependent manner. The ACF-1 ISWI chromatin remodeling complex has a lower ATP hydrolysis rate than the ACF-5 ISWI chromatin remodeling complex. Has a role in sensing the length of DNA which flank nucleosomes, which modulates the nucleosome spacing activity of the ACF-5 ISWI chromatin remodeling complex. Involved in DNA replication and together with SMARCA5/SNF2H is required for replication of pericentric heterochromatin in S-phase. May have a role in nuclear receptor-mediated transcription repression. This chain is Bromodomain adjacent to zinc finger domain protein 1A (BAZ1A), found in Homo sapiens (Human).